The chain runs to 106 residues: Large ribosomal subunit protein uL24 (106 aa).

Belongs to the universal ribosomal protein uL24 family. In terms of assembly, part of the 50S ribosomal subunit.

Functionally, one of two assembly initiator proteins, it binds directly to the 5'-end of the 23S rRNA, where it nucleates assembly of the 50S subunit. Its function is as follows. One of the proteins that surrounds the polypeptide exit tunnel on the outside of the subunit. The protein is Large ribosomal subunit protein uL24 of Delftia acidovorans (strain DSM 14801 / SPH-1).